The following is a 426-amino-acid chain: Histidine--tRNA ligase (426 aa).

Belongs to the class-II aminoacyl-tRNA synthetase family. In terms of assembly, homodimer.

The protein resides in the cytoplasm. It carries out the reaction tRNA(His) + L-histidine + ATP = L-histidyl-tRNA(His) + AMP + diphosphate + H(+). This is Histidine--tRNA ligase from Streptococcus thermophilus (strain ATCC BAA-491 / LMD-9).